The sequence spans 584 residues: Pentatricopeptide repeat-containing protein At2g01510, mitochondrial (584 aa).

The transit peptide at 1–20 directs the protein to the mitochondrion; the sequence is MLAKQTPLTKQMLSELLRAS. 9 PPR repeats span residues 73 to 107, 108 to 142, 143 to 173, 174 to 208, 209 to 243, 244 to 274, 275 to 309, 310 to 344, and 348 to 378; these read RIFLWNTLFKGYVRNQLPFESLLLYKKMRDLGVRP, DEFTYPFVVKAISQLGDFSCGFALHAHVVKYGFGC, LGIVATELVMMYMKFGELSSAEFLFESMQVK, DLVAWNAFLAVCVQTGNSAIALEYFNKMCADAVQF, DSFTVVSMLSACGQLGSLEIGEEIYDRARKEEIDC, NIIVENARLDMHLKCGNTEAARVLFEEMKQR, NVVSWSTMIVGYAMNGDSREALTLFTTMQNEGLRP, NYVTFLGVLSACSHAGLVNEGKRYFSLMVQSNDKN, and RKEHYACMVDLLGRSGLLEEAYEFIKKMPVE. The interval 383–458 is type E motif; that stretch reads IWGALLGACA…VAAYSSVEFE (76 aa). The tract at residues 459–489 is type E(+) motif; it reads GKIHFFNRGDKSHPQSKAIYEKLDEILKKIR. Residues 490–584 are type DYW motif; that stretch reads KMGYVPDTCS…NGVCSCKEFW (95 aa).

The protein belongs to the PPR family. PCMP-H subfamily.

The protein resides in the mitochondrion. This is Pentatricopeptide repeat-containing protein At2g01510, mitochondrial (PCMP-H37) from Arabidopsis thaliana (Mouse-ear cress).